A 486-amino-acid polypeptide reads, in one-letter code: tRNA-2-methylthio-N(6)-dimethylallyladenosine synthase (486 aa).

An MTTase N-terminal domain is found at 35 to 151; the sequence is RNLYVESYGC…LPRLLATVDS (117 aa). The [4Fe-4S] cluster site is built by Cys44, Cys80, Cys114, Cys189, Cys193, and Cys196. Positions 175 to 419 constitute a Radical SAM core domain; that stretch reads NSNGVSAFIS…IDKQRQHSFE (245 aa). Residues 422-485 enclose the TRAM domain; it reads LKDIGKVYQV…TGTLLGEICT (64 aa).

Belongs to the methylthiotransferase family. MiaB subfamily. In terms of assembly, monomer. [4Fe-4S] cluster serves as cofactor.

The protein resides in the cytoplasm. It catalyses the reaction N(6)-dimethylallyladenosine(37) in tRNA + (sulfur carrier)-SH + AH2 + 2 S-adenosyl-L-methionine = 2-methylsulfanyl-N(6)-dimethylallyladenosine(37) in tRNA + (sulfur carrier)-H + 5'-deoxyadenosine + L-methionine + A + S-adenosyl-L-homocysteine + 2 H(+). Its function is as follows. Catalyzes the methylthiolation of N6-(dimethylallyl)adenosine (i(6)A), leading to the formation of 2-methylthio-N6-(dimethylallyl)adenosine (ms(2)i(6)A) at position 37 in tRNAs that read codons beginning with uridine. This chain is tRNA-2-methylthio-N(6)-dimethylallyladenosine synthase, found in Amoebophilus asiaticus (strain 5a2).